A 236-amino-acid chain; its full sequence is 7-cyano-7-deazaguanine synthase (236 aa).

ATP is bound at residue 7-17 (CSGGLDSVSLA). The Zn(2+) site is built by cysteine 185, cysteine 193, cysteine 196, and cysteine 199.

Belongs to the QueC family. It depends on Zn(2+) as a cofactor.

It carries out the reaction 7-carboxy-7-deazaguanine + NH4(+) + ATP = 7-cyano-7-deazaguanine + ADP + phosphate + H2O + H(+). It functions in the pathway purine metabolism; 7-cyano-7-deazaguanine biosynthesis. Catalyzes the ATP-dependent conversion of 7-carboxy-7-deazaguanine (CDG) to 7-cyano-7-deazaguanine (preQ(0)). This is 7-cyano-7-deazaguanine synthase from Agrobacterium fabrum (strain C58 / ATCC 33970) (Agrobacterium tumefaciens (strain C58)).